We begin with the raw amino-acid sequence, 193 residues long: dCTP deaminase (193 aa).

DCTP-binding positions include arginine 110–arginine 115, aspartate 128, valine 136–glutamate 138, tyrosine 171, lysine 178, and glutamine 182. The active-site Proton donor/acceptor is the glutamate 138. The disordered stretch occupies residues arginine 169–aspartate 193.

It belongs to the dCTP deaminase family. In terms of assembly, homotrimer.

The catalysed reaction is dCTP + H2O + H(+) = dUTP + NH4(+). It participates in pyrimidine metabolism; dUMP biosynthesis; dUMP from dCTP (dUTP route): step 1/2. Its function is as follows. Catalyzes the deamination of dCTP to dUTP. The protein is dCTP deaminase of Yersinia pestis bv. Antiqua (strain Antiqua).